The following is a 255-amino-acid chain: Ditrans,polycis-undecaprenyl-diphosphate synthase ((2E,6E)-farnesyl-diphosphate specific) (255 aa).

The active site involves D21. Position 21 (D21) interacts with Mg(2+). Substrate-binding positions include 22–25 (GNGR), W26, R34, H38, and 66–68 (SSE). The active-site Proton acceptor is the N69. Substrate-binding positions include W70, R72, R189, and 195-197 (RIS). Residue E208 participates in Mg(2+) binding.

Belongs to the UPP synthase family. In terms of assembly, homodimer. The cofactor is Mg(2+).

It carries out the reaction 8 isopentenyl diphosphate + (2E,6E)-farnesyl diphosphate = di-trans,octa-cis-undecaprenyl diphosphate + 8 diphosphate. Functionally, catalyzes the sequential condensation of isopentenyl diphosphate (IPP) with (2E,6E)-farnesyl diphosphate (E,E-FPP) to yield (2Z,6Z,10Z,14Z,18Z,22Z,26Z,30Z,34E,38E)-undecaprenyl diphosphate (di-trans,octa-cis-UPP). UPP is the precursor of glycosyl carrier lipid in the biosynthesis of bacterial cell wall polysaccharide components such as peptidoglycan and lipopolysaccharide. This chain is Ditrans,polycis-undecaprenyl-diphosphate synthase ((2E,6E)-farnesyl-diphosphate specific), found in Xylella fastidiosa (strain Temecula1 / ATCC 700964).